A 302-amino-acid chain; its full sequence is Phosphoribosylaminoimidazole-succinocarboxamide synthase (302 aa).

It belongs to the SAICAR synthetase family.

The catalysed reaction is 5-amino-1-(5-phospho-D-ribosyl)imidazole-4-carboxylate + L-aspartate + ATP = (2S)-2-[5-amino-1-(5-phospho-beta-D-ribosyl)imidazole-4-carboxamido]succinate + ADP + phosphate + 2 H(+). It functions in the pathway purine metabolism; IMP biosynthesis via de novo pathway; 5-amino-1-(5-phospho-D-ribosyl)imidazole-4-carboxamide from 5-amino-1-(5-phospho-D-ribosyl)imidazole-4-carboxylate: step 1/2. This is Phosphoribosylaminoimidazole-succinocarboxamide synthase from Leptothrix cholodnii (strain ATCC 51168 / LMG 8142 / SP-6) (Leptothrix discophora (strain SP-6)).